A 308-amino-acid polypeptide reads, in one-letter code: Glutaminase (308 aa).

Residues S66, N117, E161, N168, Y192, Y244, and V262 each contribute to the substrate site.

It belongs to the glutaminase family. Homotetramer.

The catalysed reaction is L-glutamine + H2O = L-glutamate + NH4(+). The protein is Glutaminase of Cronobacter sakazakii (strain ATCC BAA-894) (Enterobacter sakazakii).